A 368-amino-acid chain; its full sequence is MSAPEKPRERSFPKIEFTDSEAGAKEFPSSKSRSYSYFTPAKLRATMYEDVTVDVQPDPDRHLTQGWIYGFGNGPGGYPKDWTTAKSSDWHAFRDPNEEWNQTIYRNNAAVVRQVELCLKNAKRARVYDGWNSTWLTFIERNVGAWMHAENGLALHVFTSIQRSGPTNMINTAVAVNAAHKMRFAQDLALFNLDLAEATEAFDGSAHRAVWQEAREWQATRKVVEELTAVGDWCQLLFATNIVFEQLVGSLFRTELIMQIAARNGDYITPTIVGTGEHDYDRDLNYTRNLFRLLTRDPEHGEANKALFTEWLGIWVPRCLDAALALQPIWSAPADKAVTFASSLDAAKAKFTALLEEIDLDIPEELNK.

Positions 1 to 17 are enriched in basic and acidic residues; sequence MSAPEKPRERSFPKIEF. The tract at residues 1 to 32 is disordered; that stretch reads MSAPEKPRERSFPKIEFTDSEAGAKEFPSSKS.

This sequence belongs to the TmoE/XamoE family. In terms of assembly, the propane 2-monooxygenase multicomponent enzyme system is composed of an electron transfer component and a monooxygenase component interacting with the effector protein MimD. The electron transfer component is composed of a reductase (MimB), and the monooxygenase component is formed by a large subunit (MimA) and a small subunit (MimC). Requires the presence of the chaperonin-like protein MimG to ensure a productive folding, resulting of a soluble MimC, which leads to the active form of MimABCD.

The enzyme catalyses propane + NADH + O2 + H(+) = propan-2-ol + NAD(+) + H2O. The catalysed reaction is acetone + NADH + O2 + H(+) = hydroxyacetone + NAD(+) + H2O. It carries out the reaction butan-2-one + NADH + O2 + H(+) = 1-hydroxy-2-butanone + NAD(+) + H2O. It catalyses the reaction phenol + NADH + O2 + H(+) = hydroquinone + NAD(+) + H2O. Functionally, component of the propane 2-monooxygenase multicomponent enzyme system which is involved in the degradation of propane via the O2-dependent hydroxylation of propane. Also involved in the degradation of acetone via the O2-dependent hydroxylation of acetone. Also able to catalyze the oxidation of phenol, methylethylketone (2-butanone), 1-propanol and 2-propanol. This Mycolicibacterium smegmatis (strain ATCC 700084 / mc(2)155) (Mycobacterium smegmatis) protein is Propane 2-monooxygenase, hydroxylase component small subunit.